Reading from the N-terminus, the 226-residue chain is UPF0173 metal-dependent hydrolase Minf_0129 (226 aa).

The protein belongs to the UPF0173 family.

The chain is UPF0173 metal-dependent hydrolase Minf_0129 from Methylacidiphilum infernorum (isolate V4) (Methylokorus infernorum (strain V4)).